A 312-amino-acid chain; its full sequence is Gamma-soluble NSF attachment protein (312 aa).

The segment at 281–312 is disordered; sequence KKKSPATPQAKPDGAAGMAAEEEEDEYSGGLC. Position 284 is a phosphoserine (S284). Phosphothreonine is present on T287. The span at 300-312 shows a compositional bias: acidic residues; sequence AEEEEDEYSGGLC. Phosphoserine is present on S308.

This sequence belongs to the SNAP family. Interacts with RAB11FIP5. Interacts with VTI1A. As to expression, abundantly expressed in the heart, liver and kidneys with lower expression in the brain, spleen, lung, muscle and testes.

The protein resides in the membrane. It is found in the golgi apparatus. In terms of biological role, required for vesicular transport between the endoplasmic reticulum and the Golgi apparatus. This is Gamma-soluble NSF attachment protein from Mus musculus (Mouse).